Here is a 246-residue protein sequence, read N- to C-terminus: TLC domain-containing protein 2 (246 aa).

6 helical membrane-spanning segments follow: residues 5 to 25, 43 to 63, 79 to 99, 107 to 127, 128 to 148, and 199 to 219; these read SVILTTGSSVGFFKLVNYGLG, ISTSFVHSLITGVWSVLCFCM, SHALVSVSIGYFIYDFLDMVI, WELLFHHVVVITCFGISVLTC, RYVGFAVVALLVEINSVFLHL, and FSYTIGSVGLAIMTAMNIVLF. In terms of domain architecture, TLC spans 35 to 231; it reads RNAWKWNNIS…LMRSDFMKAS (197 aa).

It belongs to the TLCD family.

Its subcellular location is the cell membrane. Regulates the composition and fluidity of the plasma membrane. Inhibits the incorporation of membrane-fluidizing phospholipids containing omega-3 long-chain polyunsaturated fatty acids (LCPUFA) and thereby promotes membrane rigidity. Does not appear to have any effect on LCPUFA synthesis. This is TLC domain-containing protein 2 (tlcd2) from Danio rerio (Zebrafish).